We begin with the raw amino-acid sequence, 644 residues long: Forkhead box protein O (644 aa).

The interval 39–75 (FEPQTRARSNTWPCPRPENFVEPPDELDSTKASNQQL) is disordered. At threonine 49 the chain carries Phosphothreonine; by PKB/AKT1. Serine 80 bears the Phosphoserine mark. Residues 100 to 206 (WGNLSYADLI…ETSRYEKRRG (107 aa)) constitute a DNA-binding region (fork-head). Disordered stretches follow at residues 187 to 210 (KSVR…RAKK), 222 to 276 (GLND…SPIR), 329 to 386 (QQQQ…QTLQ), 412 to 435 (SPNS…DSLN), and 578 to 612 (QQHL…NSSL). A Phosphoserine; by PKB/AKT1 modification is found at serine 195. 2 stretches are compositionally biased toward polar residues: residues 226 to 235 (ATPSPSSSVS) and 261 to 270 (RASSNASSCG). Serine 264 is subject to Phosphoserine; by PKB/AKT1. Phosphoserine is present on residues serine 267, serine 268, and serine 273. The span at 329–340 (QQQQQQQQQQQQ) shows a compositional bias: low complexity. Positions 350-359 (SQPPPPPYQP) are enriched in pro residues. Positions 360 to 374 (PQLQQQQQQQPSYSL) are enriched in low complexity. The segment covering 412-421 (SPNSVTTTMS) has biased composition (polar residues).

In terms of assembly, interacts with melt.

Its subcellular location is the cytoplasm. It localises to the nucleus. Its function is as follows. Transcription factor involved in the regulation of the insulin signaling pathway. Consistently activates both the downstream target Thor\d4EBP and the feedback control target InR. Involved in negative regulation of the cell cycle, modulating cell growth and proliferation. In response to cellular stresses, such as nutrient deprivation or increased levels of reactive oxygen species, foxo is activated and inhibits growth through the action of target genes such as Thor. Foxo activated in the adult fat body can regulate lifespan in adults; an insulin peptide itself may function as one secondary messenger of insulin-regulated aging. Also regulates Lip4, homolog of human acid lipases, thereby acting as a key modulator of lipid metabolism by insulin signaling and integrates insulin responses to glucose and lipid homeostasis. This chain is Forkhead box protein O, found in Drosophila pseudoobscura pseudoobscura (Fruit fly).